The following is a 336-amino-acid chain: Protein ABHD13 (336 aa).

Residues 37–57 (FNMYGGVILLLLIFVSIAGIL) form a helical; Signal-anchor for type II membrane protein membrane-spanning segment. Catalysis depends on charge relay system residues Ser193, Asp268, and His298. The N-linked (GlcNAc...) asparagine glycan is linked to Asn299.

The protein belongs to the serine esterase family.

Its subcellular location is the membrane. This is Protein ABHD13 from Xenopus laevis (African clawed frog).